A 390-amino-acid chain; its full sequence is Argininosuccinate synthase (390 aa).

An ATP-binding site is contributed by 6-14; it reads SYSGGLDTT. Residue Y83 coordinates L-citrulline. G113 serves as a coordination point for ATP. Positions 115, 119, and 120 each coordinate L-aspartate. Residue N119 coordinates L-citrulline. Residues R123, S169, S178, E254, and Y266 each coordinate L-citrulline.

The protein belongs to the argininosuccinate synthase family. Type 1 subfamily. Homotetramer.

The protein resides in the cytoplasm. The enzyme catalyses L-citrulline + L-aspartate + ATP = 2-(N(omega)-L-arginino)succinate + AMP + diphosphate + H(+). It participates in amino-acid biosynthesis; L-arginine biosynthesis; L-arginine from L-ornithine and carbamoyl phosphate: step 2/3. The protein is Argininosuccinate synthase of Archaeoglobus fulgidus (strain ATCC 49558 / DSM 4304 / JCM 9628 / NBRC 100126 / VC-16).